The following is a 353-amino-acid chain: D-alanine--D-alanine ligase (353 aa).

Residues 141-349 enclose the ATP-grasp domain; that stretch reads KAALAGAGLA…LEQLVHELLE (209 aa). An ATP-binding site is contributed by 176–231; the sequence is ESGLCYPCFIKPANLGSSVGISKARNREELIHGLRLAATLDPRLVVEQGVQARELE. Residues Asp302, Glu316, and Asn318 each coordinate Mg(2+).

This sequence belongs to the D-alanine--D-alanine ligase family. Requires Mg(2+) as cofactor. The cofactor is Mn(2+).

The protein localises to the cytoplasm. The catalysed reaction is 2 D-alanine + ATP = D-alanyl-D-alanine + ADP + phosphate + H(+). Its pathway is cell wall biogenesis; peptidoglycan biosynthesis. In terms of biological role, cell wall formation. This Parasynechococcus marenigrum (strain WH8102) protein is D-alanine--D-alanine ligase.